A 275-amino-acid chain; its full sequence is MSQQLQQIIDTAWENRAELSPKAAPADVREAVAHAIEQLDKGALRVAEKIDGNWTVHQWLKKAVLLSFRLEDNAPMPAGGYSQFYDKVPSKFANYTAEDFAAGGFRVVPPAIARRGSFIAKNVVLMPSYTNIGAYVDEGTMVDTWATVGSCAQIGKNVHLSGGVGIGGVLEPLQANPVIIEDNCFIGARSEVVEGVIVEENSVISMGVYLGQSTKIYDRETGEVSYGRIPAGSVVVAGNLPSKDGSHSLYCAVIVKKVDAKTRAKVGLNELLRGD.

This sequence belongs to the transferase hexapeptide repeat family.

It is found in the cytoplasm. The enzyme catalyses (S)-2,3,4,5-tetrahydrodipicolinate + succinyl-CoA + H2O = (S)-2-succinylamino-6-oxoheptanedioate + CoA. It participates in amino-acid biosynthesis; L-lysine biosynthesis via DAP pathway; LL-2,6-diaminopimelate from (S)-tetrahydrodipicolinate (succinylase route): step 1/3. This Burkholderia ambifaria (strain MC40-6) protein is 2,3,4,5-tetrahydropyridine-2,6-dicarboxylate N-succinyltransferase.